Consider the following 248-residue polypeptide: 3-deoxy-manno-octulosonate cytidylyltransferase (248 aa).

It belongs to the KdsB family.

It is found in the cytoplasm. It catalyses the reaction 3-deoxy-alpha-D-manno-oct-2-ulosonate + CTP = CMP-3-deoxy-beta-D-manno-octulosonate + diphosphate. The protein operates within nucleotide-sugar biosynthesis; CMP-3-deoxy-D-manno-octulosonate biosynthesis; CMP-3-deoxy-D-manno-octulosonate from 3-deoxy-D-manno-octulosonate and CTP: step 1/1. It functions in the pathway bacterial outer membrane biogenesis; lipopolysaccharide biosynthesis. Activates KDO (a required 8-carbon sugar) for incorporation into bacterial lipopolysaccharide in Gram-negative bacteria. This Chlorobium phaeobacteroides (strain BS1) protein is 3-deoxy-manno-octulosonate cytidylyltransferase.